Consider the following 204-residue polypeptide: MIAFLSGHLVAIEWGERSSLTVEVQGIGYRVKAPARFLKQLPPIGEPVRVFTHLVVRETELVLYGFGSPAERDVFVELIKVSGVGPALGLALLNTFGLPELVQAVVTENVRLLSLTPGVGHKTAQRLALELKTKLAHWRQGLENADRPLAGGPPPAIREEVEMALLALGYSLQEIQAALQALPSQPRPTEEWLRDAITYLSRQP.

Residues 1-67 (MIAFLSGHLV…ETELVLYGFG (67 aa)) are domain I. The interval 68-146 (SPAERDVFVE…HWRQGLENAD (79 aa)) is domain II. Positions 147 to 156 (RPLAGGPPPA) are flexible linker. The segment at 156-204 (AIREEVEMALLALGYSLQEIQAALQALPSQPRPTEEWLRDAITYLSRQP) is domain III.

This sequence belongs to the RuvA family. Homotetramer. Forms an RuvA(8)-RuvB(12)-Holliday junction (HJ) complex. HJ DNA is sandwiched between 2 RuvA tetramers; dsDNA enters through RuvA and exits via RuvB. An RuvB hexamer assembles on each DNA strand where it exits the tetramer. Each RuvB hexamer is contacted by two RuvA subunits (via domain III) on 2 adjacent RuvB subunits; this complex drives branch migration. In the full resolvosome a probable DNA-RuvA(4)-RuvB(12)-RuvC(2) complex forms which resolves the HJ.

The protein localises to the cytoplasm. The RuvA-RuvB-RuvC complex processes Holliday junction (HJ) DNA during genetic recombination and DNA repair, while the RuvA-RuvB complex plays an important role in the rescue of blocked DNA replication forks via replication fork reversal (RFR). RuvA specifically binds to HJ cruciform DNA, conferring on it an open structure. The RuvB hexamer acts as an ATP-dependent pump, pulling dsDNA into and through the RuvAB complex. HJ branch migration allows RuvC to scan DNA until it finds its consensus sequence, where it cleaves and resolves the cruciform DNA. This is Holliday junction branch migration complex subunit RuvA from Synechococcus sp. (strain JA-3-3Ab) (Cyanobacteria bacterium Yellowstone A-Prime).